The sequence spans 167 residues: MSRSQKNDNFIDKTFTILADLILKFLPTNINAKKAFSYYRDGMSAQSEGEYAEALANYYEALNLEEDPYDKSFILYNIGLIHASNGEYVKALDYYHKALEANNKLPQALNNIAVIYHYQAVKASEINDLETAQALFHEAAQYWKQAIKLAPSNYIEAQNWLLSTGRL.

TPR repeat units follow at residues Ala35–Pro68, Ser72–Leu105, and Ala120–Asn153.

The protein belongs to the Ycf3 family.

It is found in the plastid. The protein localises to the chloroplast thylakoid membrane. Essential for the assembly of the photosystem I (PSI) complex. May act as a chaperone-like factor to guide the assembly of the PSI subunits. The polypeptide is Photosystem I assembly protein Ycf3 (Galdieria sulphuraria (Red alga)).